Reading from the N-terminus, the 259-residue chain is MKPFFWRIIGSGSVNLVFIHGWGLNSCIWNNIIIILSNYFKLHLVDLPGYGKNILYKEYSFSKITEIIACKSPKKSILIGWSLGGLIATNISIVYPEKFKGLIIVSSSPCFCEKKDWPGIKKEILNNFSFQLKNDFHNTVKKFFNIQFLGTKKNNNEIKKLKNIFFRQKEPSYKTLSSGLKILKNIDIRNYLKYIKIPTLRIYGNLDVIVPVKIIPIIKKLQNFNINKNIIIPSASHAPFLSHPFLFCKIIKYFIKKFN.

Residues 16–244 (LVFIHGWGLN…ASHAPFLSHP (229 aa)) enclose the AB hydrolase-1 domain. Substrate-binding positions include Trp22, 82 to 83 (SL), and 143 to 147 (FFNIQ). Ser82 serves as the catalytic Nucleophile. Catalysis depends on residues Asp207 and His237. His237 serves as a coordination point for substrate.

Belongs to the AB hydrolase superfamily. Carboxylesterase BioH family. Monomer.

The protein resides in the cytoplasm. It catalyses the reaction 6-carboxyhexanoyl-[ACP] methyl ester + H2O = 6-carboxyhexanoyl-[ACP] + methanol + H(+). Its pathway is cofactor biosynthesis; biotin biosynthesis. In terms of biological role, the physiological role of BioH is to remove the methyl group introduced by BioC when the pimeloyl moiety is complete. It allows to synthesize pimeloyl-ACP via the fatty acid synthetic pathway through the hydrolysis of the ester bonds of pimeloyl-ACP esters. In Wigglesworthia glossinidia brevipalpis, this protein is Pimeloyl-[acyl-carrier protein] methyl ester esterase.